A 310-amino-acid polypeptide reads, in one-letter code: Homoserine kinase (310 aa).

ATP is bound at residue 91-101; that stretch reads PIGSGLGSSAC.

The protein belongs to the GHMP kinase family. Homoserine kinase subfamily.

The protein localises to the cytoplasm. The catalysed reaction is L-homoserine + ATP = O-phospho-L-homoserine + ADP + H(+). It functions in the pathway amino-acid biosynthesis; L-threonine biosynthesis; L-threonine from L-aspartate: step 4/5. Its function is as follows. Catalyzes the ATP-dependent phosphorylation of L-homoserine to L-homoserine phosphate. In Escherichia coli O81 (strain ED1a), this protein is Homoserine kinase.